Consider the following 430-residue polypeptide: Xaa-Pro aminopeptidase (430 aa).

Positions 254, 265, 348, 377, and 400 each coordinate Mn(2+).

It belongs to the peptidase M24B family. Homotetramer. Mn(2+) is required as a cofactor.

It carries out the reaction Release of any N-terminal amino acid, including proline, that is linked to proline, even from a dipeptide or tripeptide.. In Haemophilus influenzae (strain ATCC 51907 / DSM 11121 / KW20 / Rd), this protein is Xaa-Pro aminopeptidase (pepP).